The following is a 446-amino-acid chain: ATP-dependent protease ATPase subunit HslU (446 aa).

Residues I18, G60 to E65, D259, E324, and R396 contribute to the ATP site.

This sequence belongs to the ClpX chaperone family. HslU subfamily. As to quaternary structure, a double ring-shaped homohexamer of HslV is capped on each side by a ring-shaped HslU homohexamer. The assembly of the HslU/HslV complex is dependent on binding of ATP.

The protein resides in the cytoplasm. Its function is as follows. ATPase subunit of a proteasome-like degradation complex; this subunit has chaperone activity. The binding of ATP and its subsequent hydrolysis by HslU are essential for unfolding of protein substrates subsequently hydrolyzed by HslV. HslU recognizes the N-terminal part of its protein substrates and unfolds these before they are guided to HslV for hydrolysis. This is ATP-dependent protease ATPase subunit HslU from Baumannia cicadellinicola subsp. Homalodisca coagulata.